We begin with the raw amino-acid sequence, 446 residues long: MITIKKGLDLPIAGAPSQVINDGKSITKVALLGEEYVGMRPTMHVRVGDEVKKAQVLFEDKKNPGVKFTSPVSGKVIEVNRGAKRVLQSVVIEVAGDEQVTFDKFEASQLAGLDREVIKTQLVESGLWTALRTRPFSKVPAIESTTKAIFVTAMDTNPLAAKPELIINEQAEAFVAGLDVLSALTEEKVYVCKSGTSLPRSSQSNVEEHVFDGPHPAGLAGTHMHFLYPVNANNVAWSINYQDVIAFGQLFLTGELFTDRVVSLAGPVVNNPRLVRTIMGASLDELTDSEMMPGEVRVISGSVLTGTHATGPHAYLGRYHLQVSVLREGRDKELFGWATPGKNKFSVTRSFLGHLFKGQLFNMTTTTNGSDRAMVPIGNYERVVPLDMEPTLLLRDLCAGDTDSAQALGALELDEEDLALCTFVCPGKYEYGQLLRDCLNTIEKEG.

This sequence belongs to the NqrA family. Composed of six subunits; NqrA, NqrB, NqrC, NqrD, NqrE and NqrF.

The enzyme catalyses a ubiquinone + n Na(+)(in) + NADH + H(+) = a ubiquinol + n Na(+)(out) + NAD(+). In terms of biological role, NQR complex catalyzes the reduction of ubiquinone-1 to ubiquinol by two successive reactions, coupled with the transport of Na(+) ions from the cytoplasm to the periplasm. NqrA to NqrE are probably involved in the second step, the conversion of ubisemiquinone to ubiquinol. The chain is Na(+)-translocating NADH-quinone reductase subunit A from Vibrio vulnificus (strain CMCP6).